The primary structure comprises 346 residues: tRNA N6-adenosine threonylcarbamoyltransferase (346 aa).

H111 and H115 together coordinate Fe cation. Substrate-binding positions include 134-138 (LVSGG), D167, G180, and N277. D305 contacts Fe cation.

The protein belongs to the KAE1 / TsaD family. It depends on Fe(2+) as a cofactor.

The protein resides in the cytoplasm. The catalysed reaction is L-threonylcarbamoyladenylate + adenosine(37) in tRNA = N(6)-L-threonylcarbamoyladenosine(37) in tRNA + AMP + H(+). Required for the formation of a threonylcarbamoyl group on adenosine at position 37 (t(6)A37) in tRNAs that read codons beginning with adenine. Is involved in the transfer of the threonylcarbamoyl moiety of threonylcarbamoyl-AMP (TC-AMP) to the N6 group of A37, together with TsaE and TsaB. TsaD likely plays a direct catalytic role in this reaction. The sequence is that of tRNA N6-adenosine threonylcarbamoyltransferase from Bordetella parapertussis (strain 12822 / ATCC BAA-587 / NCTC 13253).